Here is a 300-residue protein sequence, read N- to C-terminus: Ribosomal RNA small subunit methyltransferase H (300 aa).

S-adenosyl-L-methionine is bound by residues alanine 43 to histidine 45, aspartate 60, aspartate 105, and glutamine 112.

The protein belongs to the methyltransferase superfamily. RsmH family.

The protein resides in the cytoplasm. The catalysed reaction is cytidine(1402) in 16S rRNA + S-adenosyl-L-methionine = N(4)-methylcytidine(1402) in 16S rRNA + S-adenosyl-L-homocysteine + H(+). Functionally, specifically methylates the N4 position of cytidine in position 1402 (C1402) of 16S rRNA. This is Ribosomal RNA small subunit methyltransferase H from Deinococcus deserti (strain DSM 17065 / CIP 109153 / LMG 22923 / VCD115).